The primary structure comprises 54 residues: Protein YojO (54 aa).

The protein belongs to the YojO family.

This is Protein YojO (yojO) from Escherichia coli (strain K12).